Consider the following 1013-residue polypeptide: Putative DNA polymerase 060R (1013 aa).

The protein belongs to the DNA polymerase type-B family.

The catalysed reaction is DNA(n) + a 2'-deoxyribonucleoside 5'-triphosphate = DNA(n+1) + diphosphate. DNA-directed DNA polymerase involved in viral DNA replication. This is Putative DNA polymerase 060R from Dryophytes versicolor (chameleon treefrog).